The chain runs to 176 residues: Shikimate kinase (176 aa).

14–19 is an ATP binding site; it reads GAGKSS. Residue Ser18 participates in Mg(2+) binding. Asp36, Arg60, and Gly82 together coordinate substrate. An ATP-binding site is contributed by Arg120. Arg138 provides a ligand contact to substrate.

Belongs to the shikimate kinase family. Monomer. It depends on Mg(2+) as a cofactor.

It localises to the cytoplasm. The enzyme catalyses shikimate + ATP = 3-phosphoshikimate + ADP + H(+). Its pathway is metabolic intermediate biosynthesis; chorismate biosynthesis; chorismate from D-erythrose 4-phosphate and phosphoenolpyruvate: step 5/7. Its function is as follows. Catalyzes the specific phosphorylation of the 3-hydroxyl group of shikimic acid using ATP as a cosubstrate. This is Shikimate kinase from Dehalococcoides mccartyi (strain ATCC BAA-2266 / KCTC 15142 / 195) (Dehalococcoides ethenogenes (strain 195)).